We begin with the raw amino-acid sequence, 622 residues long: Chaperone protein HscA homolog (622 aa).

It belongs to the heat shock protein 70 family.

In terms of biological role, chaperone involved in the maturation of iron-sulfur cluster-containing proteins. Has a low intrinsic ATPase activity which is markedly stimulated by HscB. In Burkholderia mallei (strain NCTC 10247), this protein is Chaperone protein HscA homolog.